A 260-amino-acid polypeptide reads, in one-letter code: HMP-PP phosphatase (260 aa).

Asp8 functions as the Nucleophile in the catalytic mechanism. Residues Asp8, Asp10, and Asp212 each coordinate Mg(2+).

It belongs to the HAD-like hydrolase superfamily. Cof family. Mg(2+) is required as a cofactor.

The catalysed reaction is 4-amino-2-methyl-5-(diphosphooxymethyl)pyrimidine + H2O = 4-amino-2-methyl-5-(phosphooxymethyl)pyrimidine + phosphate + H(+). Catalyzes the hydrolysis of 4-amino-2-methyl-5-hydroxymethylpyrimidine pyrophosphate (HMP-PP) to 4-amino-2-methyl-5-hydroxymethylpyrimidine phosphate (HMP-P). The chain is HMP-PP phosphatase from Shigella boydii serotype 4 (strain Sb227).